The sequence spans 223 residues: Endonuclease III (223 aa).

One can recognise a HhH domain in the interval 118–137 (RDFLTAIEGIGDKTADVVLL). Residues Cys-198, Cys-205, Cys-208, and Cys-214 each coordinate [4Fe-4S] cluster.

The protein belongs to the Nth/MutY family. The cofactor is [4Fe-4S] cluster.

It carries out the reaction 2'-deoxyribonucleotide-(2'-deoxyribose 5'-phosphate)-2'-deoxyribonucleotide-DNA = a 3'-end 2'-deoxyribonucleotide-(2,3-dehydro-2,3-deoxyribose 5'-phosphate)-DNA + a 5'-end 5'-phospho-2'-deoxyribonucleoside-DNA + H(+). Probably part of a 4-gene DNA damage response locus in which the upstream ups system, in combination with this downstream locus, functions in homologous recombination to rescue Sulfolobales from DNA-damaging threats. DNA repair enzyme that has both DNA N-glycosylase activity and AP-lyase activity. The DNA N-glycosylase activity releases various damaged pyrimidines from DNA by cleaving the N-glycosidic bond, leaving an AP (apurinic/apyrimidinic) site. The AP-lyase activity cleaves the phosphodiester bond 3' to the AP site by a beta-elimination, leaving a 3'-terminal unsaturated sugar and a product with a terminal 5'-phosphate. Nicks UV-treated plasmid DNA in a dose-dependent manner, has no activity on untreated DNA. In Sulfolobus acidocaldarius (strain ATCC 33909 / DSM 639 / JCM 8929 / NBRC 15157 / NCIMB 11770), this protein is Endonuclease III.